The chain runs to 529 residues: Glucose-6-phosphate isomerase (529 aa).

E322 functions as the Proton donor in the catalytic mechanism. Catalysis depends on residues H351 and K455.

The protein belongs to the GPI family.

The protein resides in the cytoplasm. It catalyses the reaction alpha-D-glucose 6-phosphate = beta-D-fructose 6-phosphate. It participates in carbohydrate biosynthesis; gluconeogenesis. The protein operates within carbohydrate degradation; glycolysis; D-glyceraldehyde 3-phosphate and glycerone phosphate from D-glucose: step 2/4. Its function is as follows. Catalyzes the reversible isomerization of glucose-6-phosphate to fructose-6-phosphate. The chain is Glucose-6-phosphate isomerase from Cyanothece sp. (strain PCC 7425 / ATCC 29141).